Reading from the N-terminus, the 76-residue chain is uncharacterized protein (76 aa).

EF-hand domains are found at residues 9-44 (EMDE…LGEN) and 43-76 (ENLT…IHIS).

It is found in the cytoplasm. The protein resides in the nucleus. This is an uncharacterized protein from Schizosaccharomyces pombe (strain 972 / ATCC 24843) (Fission yeast).